A 394-amino-acid polypeptide reads, in one-letter code: Metal tolerance protein 11 (394 aa).

Residues 1–103 (MVEPASPDSD…EQDNLAKSET (103 aa)) lie on the Cytoplasmic side of the membrane. Residues 104 to 124 (LAIRISNIANMLLFAAKVYAS) traverse the membrane as a helical segment. Residues 125–130 (VTSGSL) are Vacuolar-facing. A helical membrane pass occupies residues 131–151 (AIIASTLDSLLDLLSGFILWF). The Cytoplasmic segment spans residues 152–172 (TAFSMQTPNPYQYPIGKKRMQ). Residues 173–193 (PLGILVFASVMATLGLQIILE) form a helical membrane-spanning segment. Residues 194-212 (SLRTMLSSHKEFNLTKEQE) lie on the Vacuolar side of the membrane. Residues 213-233 (SWVVGIMLSVTLVKLLLVLYC) traverse the membrane as a helical segment. Residues 234 to 251 (RSFTNEIVKAYAQDHFFD) are Cytoplasmic-facing. Residues 252-272 (VITNIIGLIAVILANYIDYWI) form a helical membrane-spanning segment. Residue Asp-273 is a topological domain, vacuolar. Residues 274-294 (PVGAIILALYTIRTWSMTVLE) form a helical membrane-spanning segment. Residues 295-394 (NVNSLVGKSA…HKPEHARSHC (100 aa)) lie on the Cytoplasmic side of the membrane.

It belongs to the cation diffusion facilitator (CDF) transporter (TC 2.A.4) family. SLC30A subfamily. Widely expressed.

The protein localises to the prevacuolar compartment membrane. It is found in the golgi apparatus membrane. Functionally, cation/proton antiporter involved in endogenous manganese tolerance probably through vesicular trafficking and exocytosis. The chain is Metal tolerance protein 11 (MTP11) from Arabidopsis thaliana (Mouse-ear cress).